Consider the following 129-residue polypeptide: HTH-type transcriptional regulator GlnR (129 aa).

The HTH merR-type domain occupies 10–78 (LFPIGIVMDL…MAGIKQVLLM (69 aa)). Residues 13 to 32 (IGIVMDLTQLSARQIRYYEE) constitute a DNA-binding region (H-T-H motif).

As to quaternary structure, homodimer under conditions of nitrogen excess. Monomer under conditions of nitrogen-limited. Interacts with feedback-inhibited GlnA in order to stabilizes GlnR-DNA complex.

With respect to regulation, under conditions of nitrogen excess, the DNA binding activity of GlnR is activated by a transient interaction with feedback-inhibited GlnA. Under conditions of nitrogen-limited, GlnR is autoinhibited by its C-terminal region. Transcription repressor during nitrogen excess. On the contrary of the MerR members, which require longer DNA sites for high-affinity binding, GlnR requires a DNA sequence of 17 nucleotides as minimal binding site. In Bacillus anthracis, this protein is HTH-type transcriptional regulator GlnR.